Reading from the N-terminus, the 281-residue chain is Glycerol uptake facilitator protein (281 aa).

Residues M1–S5 are Cytoplasmic-facing. The chain crosses the membrane as a helical span at residues T6–V34. Residues A35–F39 are Periplasmic-facing. Residues G40–A60 form a helical membrane-spanning segment. At G61–S63 the chain is on the cytoplasmic side. Residues G64–L67 lie within the membrane without spanning it. Positions N68–A70 match the NPA 1 motif. The segment at residues N68 to F78 is an intramembrane region (helical). The Cytoplasmic segment spans residues A79–R84. Residues K85 to Y108 traverse the membrane as a helical segment. Residues Y109–I143 lie on the Periplasmic side of the membrane. Residues N144–D169 form a helical membrane-spanning segment. The Cytoplasmic segment spans residues G170–P177. The helical transmembrane segment at L178–M194 threads the bilayer. Residues G195 to T198 lie on the Periplasmic side of the membrane. An intramembrane segment occupies G199–M202. The NPA 2 motif lies at N203–A205. The helical intramembrane region spans N203–L216. Residues A217–P231 lie on the Periplasmic side of the membrane. The helical transmembrane segment at Y232–L254 threads the bilayer. At I255–L281 the chain is on the cytoplasmic side.

Belongs to the MIP/aquaporin (TC 1.A.8) family. As to quaternary structure, homotetramer.

The protein resides in the cell inner membrane. The enzyme catalyses glycerol(in) = glycerol(out). In terms of biological role, mediates glycerol diffusion across the cytoplasmic membrane via a pore-type mechanism. The protein is Glycerol uptake facilitator protein (glpF) of Shigella flexneri.